Consider the following 447-residue polypeptide: Argininosuccinate synthase (447 aa).

ATP contacts are provided by residues 17-25 and Ala43; that span reads AFSGGLDTS. Tyr99 is an L-citrulline binding site. The ATP site is built by Gly129 and Thr131. Residues Thr131, Asn135, and Asp136 each coordinate L-aspartate. Asn135 lines the L-citrulline pocket. ATP is bound at residue Asp136. L-citrulline contacts are provided by Arg139 and Ser192. Position 194 (Asp194) interacts with ATP. Residues Thr201, Glu203, and Glu280 each contribute to the L-citrulline site.

The protein belongs to the argininosuccinate synthase family. Type 2 subfamily. In terms of assembly, homotetramer.

It localises to the cytoplasm. The enzyme catalyses L-citrulline + L-aspartate + ATP = 2-(N(omega)-L-arginino)succinate + AMP + diphosphate + H(+). It participates in amino-acid biosynthesis; L-arginine biosynthesis; L-arginine from L-ornithine and carbamoyl phosphate: step 2/3. The sequence is that of Argininosuccinate synthase from Escherichia fergusonii (strain ATCC 35469 / DSM 13698 / CCUG 18766 / IAM 14443 / JCM 21226 / LMG 7866 / NBRC 102419 / NCTC 12128 / CDC 0568-73).